The following is a 90-amino-acid chain: Small ribosomal subunit protein uS17 (90 aa).

This sequence belongs to the universal ribosomal protein uS17 family. As to quaternary structure, part of the 30S ribosomal subunit.

One of the primary rRNA binding proteins, it binds specifically to the 5'-end of 16S ribosomal RNA. The sequence is that of Small ribosomal subunit protein uS17 from Gluconobacter oxydans (strain 621H) (Gluconobacter suboxydans).